A 479-amino-acid polypeptide reads, in one-letter code: Aspartyl/glutamyl-tRNA(Asn/Gln) amidotransferase subunit B (479 aa).

Belongs to the GatB/GatE family. GatB subfamily. As to quaternary structure, heterotrimer of A, B and C subunits.

The catalysed reaction is L-glutamyl-tRNA(Gln) + L-glutamine + ATP + H2O = L-glutaminyl-tRNA(Gln) + L-glutamate + ADP + phosphate + H(+). The enzyme catalyses L-aspartyl-tRNA(Asn) + L-glutamine + ATP + H2O = L-asparaginyl-tRNA(Asn) + L-glutamate + ADP + phosphate + 2 H(+). Its function is as follows. Allows the formation of correctly charged Asn-tRNA(Asn) or Gln-tRNA(Gln) through the transamidation of misacylated Asp-tRNA(Asn) or Glu-tRNA(Gln) in organisms which lack either or both of asparaginyl-tRNA or glutaminyl-tRNA synthetases. The reaction takes place in the presence of glutamine and ATP through an activated phospho-Asp-tRNA(Asn) or phospho-Glu-tRNA(Gln). The protein is Aspartyl/glutamyl-tRNA(Asn/Gln) amidotransferase subunit B of Halorhodospira halophila (strain DSM 244 / SL1) (Ectothiorhodospira halophila (strain DSM 244 / SL1)).